The primary structure comprises 232 residues: tRNA1(Val) (adenine(37)-N6)-methyltransferase (232 aa).

It belongs to the methyltransferase superfamily. tRNA (adenine-N(6)-)-methyltransferase family.

The protein localises to the cytoplasm. The catalysed reaction is adenosine(37) in tRNA1(Val) + S-adenosyl-L-methionine = N(6)-methyladenosine(37) in tRNA1(Val) + S-adenosyl-L-homocysteine + H(+). Specifically methylates the adenine in position 37 of tRNA(1)(Val) (anticodon cmo5UAC). The protein is tRNA1(Val) (adenine(37)-N6)-methyltransferase of Haemophilus influenzae (strain PittGG).